Reading from the N-terminus, the 204-residue chain is Nucleoside triphosphate pyrophosphatase (204 aa).

D79 acts as the Proton acceptor in catalysis.

Belongs to the Maf family. The cofactor is a divalent metal cation.

Its subcellular location is the cytoplasm. The catalysed reaction is a ribonucleoside 5'-triphosphate + H2O = a ribonucleoside 5'-phosphate + diphosphate + H(+). The enzyme catalyses a 2'-deoxyribonucleoside 5'-triphosphate + H2O = a 2'-deoxyribonucleoside 5'-phosphate + diphosphate + H(+). In terms of biological role, nucleoside triphosphate pyrophosphatase. May have a dual role in cell division arrest and in preventing the incorporation of modified nucleotides into cellular nucleic acids. The polypeptide is Nucleoside triphosphate pyrophosphatase (Trichodesmium erythraeum (strain IMS101)).